Reading from the N-terminus, the 436-residue chain is Serine/threonine-protein kinase 40 (436 aa).

Over residues 1 to 10 (MKRRASDRGA) the composition is skewed to basic and acidic residues. The segment at 1–25 (MKRRASDRGAGETSARAKALGSGIS) is disordered. Residues 35 to 332 (FILGPRLGNS…DVLEALSSII (298 aa)) enclose the Protein kinase domain. ATP is bound by residues 41–49 (LGNSPVPSI) and Lys66. Catalysis depends on Asp197, which acts as the Proton acceptor. A disordered region spans residues 396–417 (RSWVPKRQSGAGVPPVRRLGHD).

Belongs to the protein kinase superfamily. CAMK Ser/Thr protein kinase family.

It localises to the nucleus. The protein localises to the cytoplasm. The enzyme catalyses L-seryl-[protein] + ATP = O-phospho-L-seryl-[protein] + ADP + H(+). It carries out the reaction L-threonyl-[protein] + ATP = O-phospho-L-threonyl-[protein] + ADP + H(+). Its function is as follows. May be a negative regulator of NF-kappa-B and p53-mediated gene transcription. The polypeptide is Serine/threonine-protein kinase 40 (STK40) (Bos taurus (Bovine)).